The sequence spans 72 residues: DNA-directed RNA polymerase subunit Rpo10 (72 aa).

Cysteine 7, cysteine 10, cysteine 53, and cysteine 54 together coordinate Zn(2+).

The protein belongs to the archaeal Rpo10/eukaryotic RPB10 RNA polymerase subunit family. In terms of assembly, part of the RNA polymerase complex. The cofactor is Zn(2+).

The protein localises to the cytoplasm. It carries out the reaction RNA(n) + a ribonucleoside 5'-triphosphate = RNA(n+1) + diphosphate. DNA-dependent RNA polymerase (RNAP) catalyzes the transcription of DNA into RNA using the four ribonucleoside triphosphates as substrates. The polypeptide is DNA-directed RNA polymerase subunit Rpo10 (Thermoplasma acidophilum (strain ATCC 25905 / DSM 1728 / JCM 9062 / NBRC 15155 / AMRC-C165)).